The following is a 562-amino-acid chain: Phosphoglucomutase-1 (562 aa).

Position 1 is an N-acetylmethionine (methionine 1). Position 16 is an N6-acetyllysine (lysine 16). Arginine 23 is an alpha-D-glucose 1,6-bisphosphate binding site. Threonine 115 is subject to Phosphothreonine. An alpha-D-glucose 1,6-bisphosphate-binding site is contributed by serine 117. Serine 117 acts as the Phosphoserine intermediate in catalysis. Serine 117 contacts Mg(2+). A phosphoserine mark is found at serine 117 and serine 134. Threonine 185 carries the post-translational modification Phosphothreonine. Phosphoserine occurs at positions 201, 206, and 213. Mg(2+) contacts are provided by aspartate 288, aspartate 290, and aspartate 292. Alpha-D-glucose 1,6-bisphosphate contacts are provided by aspartate 292 and arginine 293. N6-acetyllysine is present on lysine 349. Phosphotyrosine is present on tyrosine 353. Position 357 (threonine 357) interacts with alpha-D-glucose 1,6-bisphosphate. Serine 369 is modified (phosphoserine). 3 residues coordinate alpha-D-glucose 1,6-bisphosphate: glutamate 376, serine 378, and lysine 389. Phosphoserine is present on serine 378. Lysine 419 bears the N6-succinyllysine mark. Threonine 467 is subject to Phosphothreonine; by PAK1. Phosphoserine occurs at positions 477, 485, and 505. The residue at position 507 (threonine 507) is a Phosphothreonine. Residues serine 509 and serine 541 each carry the phosphoserine modification.

This sequence belongs to the phosphohexose mutase family. In terms of assembly, monomer. Mg(2+) is required as a cofactor. Post-translationally, phosphorylation at Thr-467 by PAK1 significantly enhances enzymatic activity.

Its subcellular location is the cytoplasm. It catalyses the reaction alpha-D-glucose 1-phosphate = alpha-D-glucose 6-phosphate. The enzyme catalyses O-phospho-L-seryl-[protein] + alpha-D-glucose 1-phosphate = alpha-D-glucose 1,6-bisphosphate + L-seryl-[protein]. The catalysed reaction is alpha-D-glucose 1,6-bisphosphate + L-seryl-[protein] = O-phospho-L-seryl-[protein] + alpha-D-glucose 6-phosphate. With respect to regulation, glucose-1,6-bisphosphate enhances phosphorylation of the active site Ser-117, and thereby increases enzyme activity. Functionally, catalyzes the reversible isomerization of alpha-D-glucose 1-phosphate to alpha-D-glucose 6-phosphate. The mechanism proceeds via the intermediate compound alpha-D-glucose 1,6-bisphosphate. This enzyme participates in both the breakdown and synthesis of glucose. The chain is Phosphoglucomutase-1 (PGM1) from Homo sapiens (Human).